A 295-amino-acid polypeptide reads, in one-letter code: Virginiamycin B lyase (295 aa).

His227 contacts substrate. Glu267 is a binding site for Mg(2+). His269 (proton acceptor) is an active-site residue. Glu284 is a binding site for Mg(2+).

It belongs to the Vgb family. Monomer. Mg(2+) is required as a cofactor.

Functionally, inactivates the type B streptogramin antibiotics by linearizing the lactone ring at the ester linkage, generating a free phenylglycine carboxylate and converting the threonyl moiety into 2-amino-butenoic acid. The polypeptide is Virginiamycin B lyase (Bacillus licheniformis (strain ATCC 14580 / DSM 13 / JCM 2505 / CCUG 7422 / NBRC 12200 / NCIMB 9375 / NCTC 10341 / NRRL NRS-1264 / Gibson 46)).